Reading from the N-terminus, the 727-residue chain is MLLALGLTLVLYASLQAEENSFTINSIHMESLPSWEVMNGQQLTLECLVDISTTSKSRSQHRVLFYKDDAMVYNVTSREHTESYVIPQARVFHSGKYKCTVMLNNKEKTTIEYEVKVHGVSKPKVTLDKKEVTEGGVVTVNCSLQEEKPPIFFKIEKLEVGTKFVKRRIDKTSNENFVLMEFPIEAQDHVLVFRCQAGILSGFKLQESEPIRSEYVTVQESFSTPKFEIKPPGMIIEGDQLHIRCIVQVTHLVQEFTEIIIQKDKAIVATSKQSSEAVYSVMAMVEYSGHYTCKVESNRISKASSIMVNITELFPKPKLEFSSSRLDQGELLDLSCSVSGTPVANFTIQKEETVLSQYQNFSKIAEESDSGEYSCTAGIGKVVKRSGLVPIQVCEMLSKPSIFHDAKSEIIKGHAIGISCQSENGTAPITYHLMKAKSDFQTLEVTSNDPATFTDKPTRDMEYQCRADNCHSHPAVFSEILRVRVIAPVDEVVISILSSNEVQSGSEMVLRCSVKEGTSPITFQFYKEKEDRPFHQAVVNDTQAFWHNKQASKKQEGQYYCTASNRASSMRTSPRSSTLAVRVFLAPWKKGLIAVVVIGVVIATLIVAAKCYFLRKAKAKQKPVEMSRPAAPLLNSNSEKISEPSVEANSHYGYDDVSGNDAVKPINQNKDPQNMDVEYTEVEVSSLEPHQALGTRATETVYSEIRKVDPNLMENRYSRTEGSLNGT.

A signal peptide spans 1–17; it reads MLLALGLTLVLYASLQA. The Extracellular portion of the chain corresponds to 18–590; the sequence is EENSFTINSI…VRVFLAPWKK (573 aa). 6 consecutive Ig-like C2-type domains span residues 40 to 126, 135 to 213, 225 to 309, 315 to 391, 413 to 472, and 488 to 578; these read GQQL…PKVT, GGVV…PIRS, PKFE…IMVN, PKPK…LVPI, GHAI…NCHS, and PVDE…RSST. Cys-47 and Cys-99 are oxidised to a cystine. Asn-74 and Asn-141 each carry an N-linked (GlcNAc...) asparagine glycan. 2 disulfides stabilise this stretch: Cys-142–Cys-195 and Cys-245–Cys-293. 5 N-linked (GlcNAc...) asparagine glycosylation sites follow: Asn-309, Asn-345, Asn-360, Asn-424, and Asn-540. 3 disulfides stabilise this stretch: Cys-336–Cys-375, Cys-420–Cys-465, and Cys-512–Cys-561. The chain crosses the membrane as a helical span at residues 591–609; it reads GLIAVVVIGVVIATLIVAA. Topologically, residues 610–727 are cytoplasmic; sequence KCYFLRKAKA…SRTEGSLNGT (118 aa). Residue Cys-611 is the site of S-palmitoyl cysteine attachment. A disordered region spans residues 642 to 672; it reads SEPSVEANSHYGYDDVSGNDAVKPINQNKDP. Short sequence motifs (ITIM motif) lie at residues 677–682 and 700–705; these read VEYTEV and TVYSEI. Tyr-679 and Tyr-702 each carry phosphotyrosine; by FER. The segment at 698–718 is membrane-bound segment which detaches upon phosphorylation; it reads TETVYSEIRKVDPNLMENRYS. A may play a role in cytoprotective signaling region spans residues 710-727; the sequence is PNLMENRYSRTEGSLNGT. 2 positions are modified to phosphoserine: Ser-718 and Ser-723.

In terms of assembly, trans-homodimer (via Ig-like C2-type 1 and Ig-like C2-type 2 domains); trans-homodimerization is required for cell-cell interaction. Forms a complex with BDKRB2 and GNAQ. Interacts with BDKRB2 and GNAQ. Interacts with PTPN11; Tyr-702 is critical for PTPN11 recruitment. Interacts with FER. Interacts with CD177; the interaction is Ca(2+)-dependent; the interaction is direct. In terms of processing, phosphorylated on Ser and Tyr residues by src kinases after cellular activation. Upon activation, phosphorylated on Ser-718 which probably initiates the dissociation of the membrane-interaction segment (residues 698-718) from the cell membrane allowing the sequential phosphorylation of Tyr-702 and Tyr-679. Constitutively phosphorylated on Ser-723 in resting platelets. Phosphorylated on tyrosine residues by FER and FES in response to FCER1 activation. In endothelial cells Fyn mediates mechanical-force (stretch or pull) induced tyrosine phosphorylation. Palmitoylation by ZDHHC21 is necessary for cell surface expression in endothelial cells and enrichment in membrane rafts. Expressed in lung and platelets (at protein level).

The protein resides in the cell membrane. It localises to the membrane raft. It is found in the cell junction. Functionally, cell adhesion molecule which is required for leukocyte transendothelial migration (TEM) under most inflammatory conditions. Tyr-679 plays a critical role in TEM and is required for efficient trafficking of PECAM1 to and from the lateral border recycling compartment (LBRC) and is also essential for the LBRC membrane to be targeted around migrating leukocytes. Trans-homophilic interaction may play a role in endothelial cell-cell adhesion via cell junctions. Heterophilic interaction with CD177 plays a role in transendothelial migration of neutrophils. Homophilic ligation of PECAM1 prevents macrophage-mediated phagocytosis of neighboring viable leukocytes by transmitting a detachment signal. Promotes macrophage-mediated phagocytosis of apoptotic leukocytes by tethering them to the phagocytic cells; PECAM1-mediated detachment signal appears to be disabled in apoptotic leukocytes. Modulates bradykinin receptor BDKRB2 activation. Regulates bradykinin- and hyperosmotic shock-induced ERK1/2 activation in endothelial cells. Induces susceptibility to atherosclerosis. The protein is Platelet endothelial cell adhesion molecule (Pecam1) of Mus musculus (Mouse).